The sequence spans 381 residues: Opsin Rh2 (381 aa).

Topologically, residues 1–56 (MERSLLPEPPLAMALLGPRFEAQTGGNRSVLDNVLPDMAPLVNPYWSRFAPMDPTM) are extracellular. Asparagine 27 is a glycosylation site (N-linked (GlcNAc...) asparagine). Residues 57–81 (SKILGLFTLVILIISCCGNGVVVYI) traverse the membrane as a helical segment. Residues 82–93 (FGGTKSLRTPAN) lie on the Cytoplasmic side of the membrane. A helical membrane pass occupies residues 94–119 (LLVLNLAFSDFCMMASQSPVMIINFY). Topologically, residues 120–133 (YETWVLGPLWCDIY) are extracellular. Cysteine 130 and cysteine 207 are joined by a disulfide. The chain crosses the membrane as a helical span at residues 134–153 (AACGSLFGCVSIWSMCMIAF). Residues 154-172 (DRYNVIVKGINGTPMTIKT) are Cytoplasmic-facing. The chain crosses the membrane as a helical span at residues 173 to 196 (SIMKIAFIWMMAVFWTIMPLIGWS). At 197–220 (SYVPEGNLTACSIDYMTRQWNPRS) the chain is on the extracellular side. A helical transmembrane segment spans residues 221-248 (YLITYSLFVYYTPLFMICYSYWFIIATV). Residues 249–283 (AAHEKAMRDQAKKMNVKSLRSSEDCDKSAENKLAK) are Cytoplasmic-facing. Residues 284 to 307 (VALTTISLWFMAWTPYLIICYFGL) traverse the membrane as a helical segment. Residues 308–314 (FKIDGLT) are Extracellular-facing. A helical transmembrane segment spans residues 315-339 (PLTTIWGATFAKTSAVYNPIVYGIS). Lysine 326 carries the post-translational modification N6-(retinylidene)lysine. Topologically, residues 340 to 381 (HPKYRLVLKEKCPMCVCGSTDEPKPDAPPSDTETTSEAESKA) are cytoplasmic. A disordered region spans residues 358–381 (STDEPKPDAPPSDTETTSEAESKA). The segment covering 370–381 (DTETTSEAESKA) has biased composition (polar residues).

It belongs to the G-protein coupled receptor 1 family. Opsin subfamily. Some or all of the Ser/Thr residues present in the C-terminal part may be phosphorylated.

It is found in the membrane. In terms of biological role, visual pigments are the light-absorbing molecules that mediate vision. They consist of an apoprotein, opsin, covalently linked to cis-retinal. The sequence is that of Opsin Rh2 (Rh2) from Drosophila pseudoobscura pseudoobscura (Fruit fly).